A 258-amino-acid chain; its full sequence is Flagellin B3 (258 aa).

The propeptide occupies 1-8; the sequence is MRFLKKRG.

This sequence belongs to the archaeal flagellin family.

It is found in the archaeal flagellum. Functionally, flagellin is the subunit protein which polymerizes to form the filaments of archaeal flagella. The protein is Flagellin B3 (flaB3) of Thermococcus kodakarensis (strain ATCC BAA-918 / JCM 12380 / KOD1) (Pyrococcus kodakaraensis (strain KOD1)).